The chain runs to 258 residues: 5'-nucleotidase SurE (258 aa).

Residues D14, D15, S45, and N101 each coordinate a divalent metal cation.

The protein belongs to the SurE nucleotidase family. A divalent metal cation is required as a cofactor.

Its subcellular location is the cytoplasm. It carries out the reaction a ribonucleoside 5'-phosphate + H2O = a ribonucleoside + phosphate. In terms of biological role, nucleotidase that shows phosphatase activity on nucleoside 5'-monophosphates. The protein is 5'-nucleotidase SurE of Chlorobium phaeobacteroides (strain DSM 266 / SMG 266 / 2430).